The following is a 622-amino-acid chain: MAEAGVGSAEGAEEERRAVEENFPVDGNSCIASGVPSLMNPITKPATTSFNNSVVEIPRKRKGSDSDNQDTVEVDGDPQKRNEDEEHLKIKDFREAHSQTEKRRRDKMNNLIEELSAMIPQCNPMARKLDKLTVLRMAVQHLKSLKGSTSSYTEVRYKPSFLKDDELRQLILRAADGFLFVVGCNRGKILFVSESVCKILNYDQTSLIGQSLFDYLHPKDVAKVKEQLSSSDVSPREKLVDGKTGLQVHTDFQAGPARLNSGARRSFFCRIKCSRTTVKEEKECLPNPKKKDHRKYCTIHCTGYMKNWPPSEVGVEEENDVEKNSSNFNCLVAIGRLHPYIVPQKSGEIKVKATEFVTRFAMDGKFVYVDQRATAILGYLPQELLGTSCYEYCHQDDHNHLAEKHKEVLQNKEKVFTNSYKFRAKDGSFITLKSQWFSFMNPWTKELEYIVSNNTVVLGHNESAEEQVSYGSQPAEGAVKQSLVSVPGMSSGTVLGAGSIGTEIANEILELQRLHSSPPGELSPSHLLRKSPSPALTVNCSNVPNKELIQLCPSEAEVLETSEQNQGAIPFPSNEPLLGGNSQLDFAICENDDTAMTALMNYLEADGGLGDPAELSDIQWAL.

Residues 1 to 10 (MAEAGVGSAE) show a composition bias toward low complexity. 2 disordered regions span residues 1–29 (MAEA…DGNS) and 41–86 (PITK…EDEE). Over residues 45–54 (PATTSFNNSV) the composition is skewed to polar residues. Over residues 67–76 (DNQDTVEVDG) the composition is skewed to acidic residues. Positions 77-86 (DPQKRNEDEE) are enriched in basic and acidic residues. The bHLH domain maps to 92–145 (DFREAHSQTEKRRRDKMNNLIEELSAMIPQCNPMARKLDKLTVLRMAVQHLKSL). PAS domains lie at 163–235 (KDDE…DVSP) and 342–412 (VPQK…LQNK). The region spanning 417 to 460 (TNSYKFRAKDGSFITLKSQWFSFMNPWTKELEYIVSNNTVVLGH) is the PAC domain.

As to quaternary structure, component of the circadian core oscillator, which includes the CRY proteins, CLOCK, or NPAS2, BMAL1 or BMAL2, CSNK1D and/or CSNK1E, TIMELESS and the PER proteins. Interacts directly with CLOCK to form the BMAL2-CLOCK transactivator. Can form heterodimers or homodimers which interact directly with CLOCK to form the transcription activator. Expressed in the pineal gland.

It localises to the nucleus. Its function is as follows. Transcriptional activator which forms a core component of the circadian clock. The circadian clock, an internal time-keeping system, regulates various physiological processes through the generation of approximately 24 hour circadian rhythms in gene expression, which are translated into rhythms in metabolism and behavior. It is derived from the Latin roots 'circa' (about) and 'diem' (day) and acts as an important regulator of a wide array of physiological functions including metabolism, sleep, body temperature, blood pressure, endocrine, immune, cardiovascular, and renal function. Consists of two major components: the central clock, residing in the suprachiasmatic nucleus (SCN) of the brain, and the peripheral clocks that are present in nearly every tissue and organ system. Both the central and peripheral clocks can be reset by environmental cues, also known as Zeitgebers (German for 'timegivers'). The predominant Zeitgeber for the central clock is light, which is sensed by retina and signals directly to the SCN. The central clock entrains the peripheral clocks through neuronal and hormonal signals, body temperature and feeding-related cues, aligning all clocks with the external light/dark cycle. Circadian rhythms allow an organism to achieve temporal homeostasis with its environment at the molecular level by regulating gene expression to create a peak of protein expression once every 24 hours to control when a particular physiological process is most active with respect to the solar day. Transcription and translation of core clock components (CLOCK, NPAS2, BMAL1, BMAL2, PER1, PER2, PER3, CRY1 and CRY2) plays a critical role in rhythm generation, whereas delays imposed by post-translational modifications (PTMs) are important for determining the period (tau) of the rhythms (tau refers to the period of a rhythm and is the length, in time, of one complete cycle). A diurnal rhythm is synchronized with the day/night cycle, while the ultradian and infradian rhythms have a period shorter and longer than 24 hours, respectively. Disruptions in the circadian rhythms contribute to the pathology of cardiovascular diseases, cancer, metabolic syndromes and aging. A transcription/translation feedback loop (TTFL) forms the core of the molecular circadian clock mechanism. Transcription factors, CLOCK or NPAS2 and BMAL1 or BMAL2, form the positive limb of the feedback loop, act in the form of a heterodimer and activate the transcription of core clock genes and clock-controlled genes (involved in key metabolic processes), harboring E-box elements (5'-CACGTG-3') within their promoters. The core clock genes: PER1/2/3 and CRY1/2 which are transcriptional repressors form the negative limb of the feedback loop and interact with the CLOCK|NPAS2-BMAL1|BMAL2 heterodimer inhibiting its activity and thereby negatively regulating their own expression. This heterodimer also activates nuclear receptors NR1D1/2 and RORA/B/G, which form a second feedback loop and which activate and repress BMAL1 transcription, respectively. The preferred binding motif for the CLOCK-BMAL1 heterodimer is 5'-CACGTGA-3', which contains a flanking adenine nucleotide at the 3-prime end of the canonical 6-nucleotide E-box sequence. CLOCK specifically binds to the half-site 5'-CAC-3', while BMAL1 binds to the half-site 5'-GTGA-3'. The protein is Basic helix-loop-helix ARNT-like protein 2 (BMAL2) of Gallus gallus (Chicken).